The primary structure comprises 240 residues: Interleukin-1 receptor-associated kinase 1-binding protein 1 homolog (240 aa).

The protein belongs to the IRAK1BP1 family.

It is found in the cytoplasm. It localises to the nucleus. Functionally, may be part of a signaling pathway that leads to NF-kappa-B activation. In Oncorhynchus mykiss (Rainbow trout), this protein is Interleukin-1 receptor-associated kinase 1-binding protein 1 homolog (irak1bp1).